The chain runs to 2123 residues: Bromodomain adjacent to zinc finger domain protein 2B (2123 aa).

7 disordered regions span residues 1–129 (MESG…VNGT), 144–306 (TPAS…LSQQ), 357–402 (PSPD…EMGK), 473–534 (NENV…HPHP), 546–691 (RGTD…RRVA), 756–793 (RAMD…GSAE), and 937–960 (ARKK…LNKE). Over residues 7–46 (LPSSPASSTTPTSSSAPSVASAVSKSSLSTGAASLSSTAS) the composition is skewed to low complexity. Residues 83–95 (FFPPLLGIPPLFA) show a composition bias toward pro residues. Residues 100–116 (NHDSSFHSRTSGKSSRN) show a composition bias toward polar residues. 2 stretches are compositionally biased toward low complexity: residues 147–157 (SSSMGQNQSTS) and 193–216 (ESSS…ISSS). A compositionally biased stretch (acidic residues) spans 217–243 (DSDDLEEEEEEDQSVEESEDDDSDSET). Over residues 259 to 277 (SDPKTDGQKATEKAQERRT) the composition is skewed to basic and acidic residues. Low complexity-rich tracts occupy residues 291 to 306 (PPFQ…LSQQ) and 366 to 379 (NKNT…LTSE). Residues 473–502 (NENVSSSTPFSSPVNLSTSGRRAPGSQTPA) are compositionally biased toward polar residues. Residues 546–559 (RGTDSDVPSSKDSE) show a composition bias toward basic and acidic residues. The segment covering 560 to 587 (DSNEDEEEDDEEEDEEDDEDDESDDSQS) has biased composition (acidic residues). Residues 588–597 (ESDSNSQSDS) show a composition bias toward low complexity. Residues 598-615 (EGSEDDEEKDQEESDSDT) show a composition bias toward acidic residues. 2 stretches are compositionally biased toward low complexity: residues 628-637 (SSSAKSPPSS) and 671-683 (TSSS…PHSG). Residues 690–765 (VADDQELRIP…RAMDGRRGRP (76 aa)) enclose the MBD domain. Over residues 756 to 778 (RAMDGRRGRPPNPDRPRAREESR) the composition is skewed to basic and acidic residues. The DDT domain occupies 1004–1069 (GTTFSDCLMV…LSAAVCDPGL (66 aa)). Disordered stretches follow at residues 1183 to 1260 (RDAS…QTAS), 1396 to 1444 (PPES…KTDA), 1499 to 1526 (TLVT…SSVQ), and 1588 to 1614 (FLTS…AQPV). A compositionally biased stretch (acidic residues) spans 1214–1238 (SDYDDDDDDDSDDQADEDEEDEEDK). Basic and acidic residues predominate over residues 1239–1248 (DDKKGKKTDI). Positions 1254–1281 (EGDQTASVEELEKQIEKLSKQQSQYRRK) form a coiled coil. Polar residues-rich tracts occupy residues 1408-1422 (NVST…QNSG) and 1430-1444 (PSAT…KTDA). The span at 1505-1515 (SQPPSKSPSPA) shows a compositional bias: pro residues. A compositionally biased stretch (low complexity) spans 1588-1600 (FLTSSVASSKSDS). The PHD-type zinc-finger motif lies at 1886–1936 (KVYCQICRKGDNEELLLLCDGCDKGCHTYCHRPKITTIPDGDWFCPACISK). Positions 1949–2013 (VKGKKTNDSK…AESTTSIKKP (65 aa)) are disordered. Over residues 1984–1995 (GSKELKKRKMEE) the composition is skewed to basic and acidic residues. Positions 1996 to 2010 (TTSLNLSKAESTTSI) are enriched in polar residues. The region spanning 2015-2119 (KDESRDLALC…KYFEKKWTDT (105 aa)) is the Bromo domain.

This sequence belongs to the WAL family. As to quaternary structure, component of the BRF-1 ISWI chromatin remodeling complex, at least composed of SMARCA1 and BAZ2B, which regulates the spacing of histone octamers on the DNA template to facilitate access to DNA. Within the BRF-1 ISWI chromatin remodeling complex interacts with SMARCA1; the interaction is direct. Component of the BRF-5 ISWI chromatin remodeling complex, at least composed of SMARCA5/SNF2H and BAZ2B, which regulates the spacing of histone octamers on the DNA template to facilitate access to DNA. Within the BRF-5 ISWI chromatin remodeling complex interacts with SMARCA5/SNF2H; the interaction is direct. Interacts with acetylated lysine residues on histone H1.4, H2A, H2B, H3 and H4 (in vitro). Interacts with EHMT1.

It is found in the nucleus. Regulatory subunit of the ATP-dependent BRF-1 and BRF-5 ISWI chromatin remodeling complexes, which form ordered nucleosome arrays on chromatin and facilitate access to DNA during DNA-templated processes such as DNA replication, transcription, and repair. Both complexes regulate the spacing of nucleosomes along the chromatin and have the ability to slide mononucleosomes to the center of a DNA template. The BRF-1 ISWI chromatin remodeling complex has a lower ATP hydrolysis rate than the BRF-5 ISWI chromatin remodeling complex. Chromatin reader protein, involved in positively modulating the rate of age-related behavioral deterioration. Represses the expression of mitochondrial function-related genes, perhaps by occupying their promoter regions, working in concert with histone methyltransferase EHMT1. The protein is Bromodomain adjacent to zinc finger domain protein 2B of Mus musculus (Mouse).